Consider the following 378-residue polypeptide: L-lactate dehydrogenase (378 aa).

The region spanning 1–378 (MIISASTDYR…ELSRDSLVKR (378 aa)) is the FMN hydroxy acid dehydrogenase domain. Tyr-24 provides a ligand contact to substrate. FMN contacts are provided by Ser-106 and Gln-127. Residue Tyr-129 participates in substrate binding. Thr-155 is an FMN binding site. A substrate-binding site is contributed by Arg-164. Lys-251 provides a ligand contact to FMN. The Proton acceptor role is filled by His-275. Position 278 (Arg-278) interacts with substrate. FMN is bound at residue 306 to 330 (DSGIRTGLDVVRMLALGADCTMLGR).

This sequence belongs to the FMN-dependent alpha-hydroxy acid dehydrogenase family. It depends on FMN as a cofactor.

The protein localises to the cell inner membrane. The enzyme catalyses (S)-lactate + A = pyruvate + AH2. In terms of biological role, catalyzes the conversion of L-lactate to pyruvate. Is coupled to the respiratory chain. This is L-lactate dehydrogenase from Vibrio cholerae serotype O1 (strain ATCC 39315 / El Tor Inaba N16961).